The chain runs to 72 residues: uncharacterized protein (72 aa).

This is an uncharacterized protein from Mycobacterium tuberculosis (strain ATCC 25618 / H37Rv).